Reading from the N-terminus, the 271-residue chain is MAIAMAVVSFPSLLNKTTLSSSLFTPTFLPAKSSSLLIKSSPKTRFVVSSSMEAGIGVMGSKLGMMSFFEEDGTVVPVTVVGFREGNIVTQIKTLATDGYDAVQIGYRRVRDKKLTKPETGHLQKAGTIPMRHLQEFRLTNIEGFEPNQKLVFDEIFKEGDLVDVAGTTIGKGFQGGIKRHHFKRGQMTHGSKSHRALGSIGAGTTPGRVYKGKKMPGRMGGTRTKIRKLKIVKVDKELNVVMIKGALPGKPGNLLRITPAKIVGVNIPKN.

The transit peptide at 1–49 directs the protein to the chloroplast; the sequence is MAIAMAVVSFPSLLNKTTLSSSLFTPTFLPAKSSSLLIKSSPKTRFVVS. A disordered region spans residues 190–222; the sequence is HGSKSHRALGSIGAGTTPGRVYKGKKMPGRMGG.

Belongs to the universal ribosomal protein uL3 family. Part of the 50S ribosomal subunit.

It localises to the plastid. Its subcellular location is the chloroplast. Its function is as follows. One of the primary rRNA binding proteins, it binds directly near the 3'-end of the 23S rRNA, where it nucleates assembly of the 50S subunit. This Arabidopsis thaliana (Mouse-ear cress) protein is Large ribosomal subunit protein uL3c (RPL3A).